The sequence spans 106 residues: Small ribosomal subunit protein uS17 (106 aa).

This sequence belongs to the universal ribosomal protein uS17 family. Part of the 30S ribosomal subunit.

Its function is as follows. One of the primary rRNA binding proteins, it binds specifically to the 5'-end of 16S ribosomal RNA. The polypeptide is Small ribosomal subunit protein uS17 (Picrophilus torridus (strain ATCC 700027 / DSM 9790 / JCM 10055 / NBRC 100828 / KAW 2/3)).